Reading from the N-terminus, the 1144-residue chain is Formin-like protein 18 (1144 aa).

Positions 17 to 193 (LEISERVYVF…QYISRRNVGS (177 aa)) constitute a Phosphatase tensin-type domain. Cys126 (phosphocysteine intermediate) is an active-site residue. In terms of domain architecture, C2 tensin-type spans 199-338 (DQALTLDCVN…FSAEVIFSEM (140 aa)). Disordered regions lie at residues 429-463 (ISEN…SILK) and 482-729 (KIFS…KGRG). Residues 441 to 450 (SPEKEKDTMS) show a composition bias toward basic and acidic residues. Residues 491–522 (SPVTSPLPNRSPTQGSPASISRFHSSPSSLGI) show a composition bias toward polar residues. Residues 526–536 (LHDHGSCKDEE) show a composition bias toward basic and acidic residues. A compositionally biased stretch (low complexity) spans 538-548 (TSSSPASPSIS). The span at 555-580 (PLTSSQPKKASPQCPQSPTPVHSNGP) shows a compositional bias: polar residues. Residues 603–613 (RPPPPPPPPPI) are compositionally biased toward pro residues. The span at 614–629 (SSLRSTPSPSSTSNSI) shows a compositional bias: low complexity. Positions 633-643 (GPPPPPPPPPL) are enriched in pro residues. A compositionally biased stretch (low complexity) spans 644 to 653 (QSHRSALSSS). Positions 669-678 (NPPPPPPPPL) are enriched in pro residues. The segment covering 679–695 (HSNSRMGAPTSSLVLKS) has biased composition (low complexity). Residues 696–705 (PPVPPPPAPA) show a composition bias toward pro residues. Residues 735 to 1135 (KGQGQTRKAN…RAQKEAENEK (401 aa)) form the FH2 domain.

This sequence belongs to the formin-like family. Class-II subfamily.

The sequence is that of Formin-like protein 18 (FH18) from Arabidopsis thaliana (Mouse-ear cress).